The chain runs to 313 residues: Porphobilinogen deaminase 2 (313 aa).

An S-(dipyrrolylmethanemethyl)cysteine modification is found at Cys-246.

The protein belongs to the HMBS family. Monomer. It depends on dipyrromethane as a cofactor.

It carries out the reaction 4 porphobilinogen + H2O = hydroxymethylbilane + 4 NH4(+). The protein operates within porphyrin-containing compound metabolism; protoporphyrin-IX biosynthesis; coproporphyrinogen-III from 5-aminolevulinate: step 2/4. Tetrapolymerization of the monopyrrole PBG into the hydroxymethylbilane pre-uroporphyrinogen in several discrete steps. The sequence is that of Porphobilinogen deaminase 2 (hemC2) from Streptomyces coelicolor (strain ATCC BAA-471 / A3(2) / M145).